Reading from the N-terminus, the 257-residue chain is Dihydroorotate dehydrogenase B (NAD(+)), electron transfer subunit (257 aa).

The 101-residue stretch at 2-102 folds into the FAD-binding FR-type domain; the sequence is IGRERMTVVS…LGPLGHGFPL (101 aa). Residues 53-56, 70-72, and 77-78 contribute to the FAD site; these read RPLS, IYR, and GT. Residues cysteine 221, cysteine 226, cysteine 229, and cysteine 244 each coordinate [2Fe-2S] cluster.

Belongs to the PyrK family. In terms of assembly, heterotetramer of 2 PyrK and 2 PyrD type B subunits. [2Fe-2S] cluster is required as a cofactor. It depends on FAD as a cofactor.

The protein operates within pyrimidine metabolism; UMP biosynthesis via de novo pathway; orotate from (S)-dihydroorotate (NAD(+) route): step 1/1. Responsible for channeling the electrons from the oxidation of dihydroorotate from the FMN redox center in the PyrD type B subunit to the ultimate electron acceptor NAD(+). In Geobacillus thermodenitrificans (strain NG80-2), this protein is Dihydroorotate dehydrogenase B (NAD(+)), electron transfer subunit.